Here is a 397-residue protein sequence, read N- to C-terminus: Lysophospholipid transporter LplT (397 aa).

Residues 1–17 are Periplasmic-facing; the sequence is MSESVHTNTSLWSKGMK. Residues 18-38 traverse the membrane as a helical segment; it reads AVIVAQFLSAFGDNALLFATL. Residues 39–52 lie on the Cytoplasmic side of the membrane; the sequence is ALLKAQFYPEWSQP. Residues 53–73 traverse the membrane as a helical segment; the sequence is ILQMVFVGAYILFAPFVGQVA. Topologically, residues 74 to 90 are periplasmic; that stretch reads DSFAKGRVMMFANGLKL. The helical transmembrane segment at 91–111 threads the bilayer; that stretch reads LGAASICFGINPFLGYTLVGV. Topologically, residues 112 to 144 are cytoplasmic; the sequence is GAAAYSPAKYGILGELTTGSKLVKANGLMEAST. A helical membrane pass occupies residues 145 to 165; that stretch reads IAAILLGSVAGGVLADWHILV. Residue A166 is a topological domain, periplasmic. A helical membrane pass occupies residues 167–187; the sequence is LVACALAYGGAVVANIYIPKL. At 188 to 226 the chain is on the cytoplasmic side; the sequence is AAARPGQSWNLISMTRSFLNACTSLWRNGETRFSLVGTS. The helical transmembrane segment at 227-247 threads the bilayer; that stretch reads LFWGAGVTLRFLLVLWVPVAL. At 248 to 256 the chain is on the periplasmic side; that stretch reads GITDNATPT. The chain crosses the membrane as a helical span at residues 257–277; sequence YLNAMVAIGIVVGAGAAAKLV. At 278–280 the chain is on the cytoplasmic side; the sequence is TLE. The chain crosses the membrane as a helical span at residues 281–301; the sequence is TVSRCMPAGILIGVVVLIFSL. Topologically, residues 302-304 are periplasmic; that stretch reads QHE. Residues 305–325 traverse the membrane as a helical segment; that stretch reads LLPAYALLMLIGVLGGFFVVP. The Cytoplasmic segment spans residues 326 to 343; that stretch reads LNALLQERGKKSVGAGNA. A helical transmembrane segment spans residues 344 to 364; sequence IAVQNLGENSAMLLMLGIYSL. The Periplasmic portion of the chain corresponds to 365 to 366; it reads AV. Residues 367–387 form a helical membrane-spanning segment; that stretch reads MVGIPVVPIGIGFGALFALAI. The Cytoplasmic segment spans residues 388-397; that stretch reads TALWIWQRRH.

This sequence belongs to the major facilitator superfamily. LplT (TC 2.A.1.42) family.

It is found in the cell inner membrane. Catalyzes the facilitated diffusion of 2-acyl-glycero-3-phosphoethanolamine (2-acyl-GPE) into the cell. In Escherichia coli O81 (strain ED1a), this protein is Lysophospholipid transporter LplT.